We begin with the raw amino-acid sequence, 449 residues long: Glucose-6-phosphate isomerase (449 aa).

The active-site Proton donor is glutamate 291. Residues histidine 312 and lysine 426 contribute to the active site.

The protein belongs to the GPI family.

It is found in the cytoplasm. The catalysed reaction is alpha-D-glucose 6-phosphate = beta-D-fructose 6-phosphate. Its pathway is carbohydrate biosynthesis; gluconeogenesis. It functions in the pathway carbohydrate degradation; glycolysis; D-glyceraldehyde 3-phosphate and glycerone phosphate from D-glucose: step 2/4. Catalyzes the reversible isomerization of glucose-6-phosphate to fructose-6-phosphate. This Streptococcus pyogenes serotype M18 (strain MGAS8232) protein is Glucose-6-phosphate isomerase.